The sequence spans 62 residues: Metallothionein-4 (62 aa).

Residues cysteine 6, cysteine 8, cysteine 14, cysteine 16, cysteine 20, cysteine 22, cysteine 25, cysteine 27, cysteine 30, cysteine 34, cysteine 35, cysteine 37, cysteine 38, cysteine 42, cysteine 45, cysteine 49, cysteine 51, cysteine 58, cysteine 60, and cysteine 61 each contribute to the a divalent metal cation site.

It belongs to the metallothionein superfamily. Type 1 family.

In terms of biological role, seems to bind zinc and copper. Could play a special role in regulating zinc metabolism during the differentiation of stratified epithelia. The sequence is that of Metallothionein-4 (MT4) from Canis lupus familiaris (Dog).